A 212-amino-acid polypeptide reads, in one-letter code: Large ribosomal subunit protein bL25 (212 aa).

Residues 1-16 (MKTRIDLTVEPRETGK) are compositionally biased toward basic and acidic residues. The disordered stretch occupies residues 1-22 (MKTRIDLTVEPRETGKHNSRGL).

Belongs to the bacterial ribosomal protein bL25 family. CTC subfamily. As to quaternary structure, part of the 50S ribosomal subunit; part of the 5S rRNA/L5/L18/L25 subcomplex. Contacts the 5S rRNA. Binds to the 5S rRNA independently of L5 and L18.

In terms of biological role, this is one of the proteins that binds to the 5S RNA in the ribosome where it forms part of the central protuberance. The chain is Large ribosomal subunit protein bL25 from Bdellovibrio bacteriovorus (strain ATCC 15356 / DSM 50701 / NCIMB 9529 / HD100).